A 340-amino-acid polypeptide reads, in one-letter code: N-acetyl-gamma-glutamyl-phosphate reductase (340 aa).

Residue Cys151 is part of the active site.

Belongs to the NAGSA dehydrogenase family. Type 1 subfamily.

It is found in the cytoplasm. It catalyses the reaction N-acetyl-L-glutamate 5-semialdehyde + phosphate + NADP(+) = N-acetyl-L-glutamyl 5-phosphate + NADPH + H(+). The protein operates within amino-acid biosynthesis; L-arginine biosynthesis; N(2)-acetyl-L-ornithine from L-glutamate: step 3/4. Functionally, catalyzes the NADPH-dependent reduction of N-acetyl-5-glutamyl phosphate to yield N-acetyl-L-glutamate 5-semialdehyde. In Aquifex aeolicus (strain VF5), this protein is N-acetyl-gamma-glutamyl-phosphate reductase.